We begin with the raw amino-acid sequence, 233 residues long: ATP-dependent Clp protease proteolytic subunit 2 (233 aa).

The Nucleophile role is filled by S116. H141 is an active-site residue. Positions 214-233 (EGLKSIQPNGEAADDSEDDA) are disordered.

This sequence belongs to the peptidase S14 family. In terms of assembly, fourteen ClpP subunits assemble into 2 heptameric rings which stack back to back to give a disk-like structure with a central cavity, resembling the structure of eukaryotic proteasomes.

It is found in the cytoplasm. The enzyme catalyses Hydrolysis of proteins to small peptides in the presence of ATP and magnesium. alpha-casein is the usual test substrate. In the absence of ATP, only oligopeptides shorter than five residues are hydrolyzed (such as succinyl-Leu-Tyr-|-NHMec, and Leu-Tyr-Leu-|-Tyr-Trp, in which cleavage of the -Tyr-|-Leu- and -Tyr-|-Trp bonds also occurs).. Functionally, cleaves peptides in various proteins in a process that requires ATP hydrolysis. Has a chymotrypsin-like activity. Plays a major role in the degradation of misfolded proteins. The polypeptide is ATP-dependent Clp protease proteolytic subunit 2 (Salinibacter ruber (strain DSM 13855 / M31)).